The chain runs to 522 residues: Putative ribose/galactose/methyl galactoside import ATP-binding protein (522 aa).

ABC transporter domains follow at residues 7–244 (LEMV…VGRE) and 254–498 (PKLG…TGQA). ATP is bound at residue 39–46 (GENGAGKS).

Belongs to the ABC transporter superfamily. Carbohydrate importer 2 (CUT2) (TC 3.A.1.2) family.

Its subcellular location is the cell membrane. It carries out the reaction D-ribose(out) + ATP + H2O = D-ribose(in) + ADP + phosphate + H(+). It catalyses the reaction D-galactose(out) + ATP + H2O = D-galactose(in) + ADP + phosphate + H(+). Its function is as follows. Part of an ABC transporter complex involved in carbohydrate import. Could be involved in ribose, galactose and/or methyl galactoside import. Responsible for energy coupling to the transport system. The polypeptide is Putative ribose/galactose/methyl galactoside import ATP-binding protein (Halalkalibacterium halodurans (strain ATCC BAA-125 / DSM 18197 / FERM 7344 / JCM 9153 / C-125) (Bacillus halodurans)).